Reading from the N-terminus, the 157-residue chain is Transcriptional regulator MraZ (157 aa).

2 consecutive SpoVT-AbrB domains span residues 7-54 (TYTM…GTSL) and 83-126 (TEML…EPER).

It belongs to the MraZ family. In terms of assembly, forms oligomers.

It localises to the cytoplasm. The protein resides in the nucleoid. The chain is Transcriptional regulator MraZ from Azorhizobium caulinodans (strain ATCC 43989 / DSM 5975 / JCM 20966 / LMG 6465 / NBRC 14845 / NCIMB 13405 / ORS 571).